The sequence spans 159 residues: Phosphopantetheine adenylyltransferase (159 aa).

Ser9 contributes to the substrate binding site. Residues 9-10 (SF) and His17 each bind ATP. Substrate is bound by residues Lys41, Leu73, and Lys87. ATP-binding positions include 88 to 90 (GLR), Glu98, and 123 to 129 (NIHISSS).

Belongs to the bacterial CoaD family. As to quaternary structure, homohexamer. It depends on Mg(2+) as a cofactor.

Its subcellular location is the cytoplasm. It catalyses the reaction (R)-4'-phosphopantetheine + ATP + H(+) = 3'-dephospho-CoA + diphosphate. It functions in the pathway cofactor biosynthesis; coenzyme A biosynthesis; CoA from (R)-pantothenate: step 4/5. In terms of biological role, reversibly transfers an adenylyl group from ATP to 4'-phosphopantetheine, yielding dephospho-CoA (dPCoA) and pyrophosphate. The chain is Phosphopantetheine adenylyltransferase from Clostridium beijerinckii (strain ATCC 51743 / NCIMB 8052) (Clostridium acetobutylicum).